The sequence spans 231 residues: 5'-methylthioadenosine/S-adenosylhomocysteine nucleosidase (231 aa).

Catalysis depends on Glu-12, which acts as the Proton acceptor. Substrate contacts are provided by residues Gly-78, Met-153, and 174 to 175 (ME). Asp-198 serves as the catalytic Proton donor.

The protein belongs to the PNP/UDP phosphorylase family. MtnN subfamily.

It carries out the reaction S-adenosyl-L-homocysteine + H2O = S-(5-deoxy-D-ribos-5-yl)-L-homocysteine + adenine. The enzyme catalyses S-methyl-5'-thioadenosine + H2O = 5-(methylsulfanyl)-D-ribose + adenine. The catalysed reaction is 5'-deoxyadenosine + H2O = 5-deoxy-D-ribose + adenine. It functions in the pathway amino-acid biosynthesis; L-methionine biosynthesis via salvage pathway; S-methyl-5-thio-alpha-D-ribose 1-phosphate from S-methyl-5'-thioadenosine (hydrolase route): step 1/2. Functionally, catalyzes the irreversible cleavage of the glycosidic bond in both 5'-methylthioadenosine (MTA) and S-adenosylhomocysteine (SAH/AdoHcy) to adenine and the corresponding thioribose, 5'-methylthioribose and S-ribosylhomocysteine, respectively. Also cleaves 5'-deoxyadenosine, a toxic by-product of radical S-adenosylmethionine (SAM) enzymes, into 5-deoxyribose and adenine. The polypeptide is 5'-methylthioadenosine/S-adenosylhomocysteine nucleosidase (Bacillus pumilus (strain SAFR-032)).